Reading from the N-terminus, the 284-residue chain is uncharacterized protein (284 aa).

Gln-54 contacts FMN. Cys-83 acts as the Proton donor in catalysis. FMN contacts are provided by residues Lys-125, His-153, 183–185 (NGG), and 207–208 (AN).

Belongs to the Dus family. FMN serves as cofactor.

In terms of biological role, catalyzes the synthesis of dihydrouridine, a modified base found in the D-loop of most tRNAs. This is an uncharacterized protein from Caenorhabditis elegans.